The sequence spans 595 residues: Putative lipase atg15 (595 aa).

Residues 1 to 20 (MKGLRGHNKKSFWGNTRLSD) are Cytoplasmic-facing. Residues 21 to 41 (LLWPVTLLPGLISAYQPVYLG) form a helical; Signal-anchor for type II membrane protein membrane-spanning segment. Residues 42 to 595 (SRQSSPFLPP…TTTGKHLGRF (554 aa)) lie on the Lumenal side of the membrane. 5 N-linked (GlcNAc...) asparagine glycosylation sites follow: Asn164, Asn199, Asn221, Asn279, and Asn303. The active-site Charge relay system is the Ser319. The N-linked (GlcNAc...) asparagine glycan is linked to Asn465.

Belongs to the AB hydrolase superfamily. Lipase family. In terms of assembly, binds to both phosphatidylinositol (PI) and phosphatidylinositol 3,5-bisphosphate (PIP2).

The protein localises to the endosome. The protein resides in the multivesicular body membrane. Its subcellular location is the prevacuolar compartment membrane. The enzyme catalyses a triacylglycerol + H2O = a diacylglycerol + a fatty acid + H(+). In terms of biological role, lipase which is essential for lysis of subvacuolar cytoplasm to vacuole targeted bodies and intravacuolar autophagic bodies. Involved in the lysis of intravacuolar multivesicular body (MVB) vesicles. The intravacuolar membrane disintegration by atg15 is critical to life span extension. In Aspergillus niger (strain ATCC MYA-4892 / CBS 513.88 / FGSC A1513), this protein is Putative lipase atg15 (atg15).